The sequence spans 298 residues: Inosose dehydratase (298 aa).

It belongs to the IolE/MocC family. The cofactor is glutathione. It depends on Co(2+) as a cofactor. Mn(2+) serves as cofactor.

It carries out the reaction scyllo-inosose = 3D-3,5/4-trihydroxycyclohexane-1,2-dione + H2O. The protein operates within polyol metabolism; myo-inositol degradation into acetyl-CoA; acetyl-CoA from myo-inositol: step 2/7. In terms of biological role, catalyzes the dehydration of inosose (2-keto-myo-inositol, 2KMI or 2,4,6/3,5-pentahydroxycyclohexanone) to 3D-(3,5/4)-trihydroxycyclohexane-1,2-dione (D-2,3-diketo-4-deoxy-epi-inositol). The chain is Inosose dehydratase from Bacillus velezensis (strain DSM 23117 / BGSC 10A6 / LMG 26770 / FZB42) (Bacillus amyloliquefaciens subsp. plantarum).